A 91-amino-acid polypeptide reads, in one-letter code: Small ribosomal subunit protein uS19 (91 aa).

Belongs to the universal ribosomal protein uS19 family.

In terms of biological role, protein S19 forms a complex with S13 that binds strongly to the 16S ribosomal RNA. The polypeptide is Small ribosomal subunit protein uS19 (Metamycoplasma arthritidis (strain 158L3-1) (Mycoplasma arthritidis)).